A 162-amino-acid polypeptide reads, in one-letter code: uncharacterized protein (162 aa).

The disordered stretch occupies residues 1 to 23; sequence MAQLPLSPAPQRPETKTPGKPEA. The segment covering 13-23 has biased composition (basic and acidic residues); the sequence is PETKTPGKPEA.

This is an uncharacterized protein from Rhodobacter capsulatus (Rhodopseudomonas capsulata).